We begin with the raw amino-acid sequence, 404 residues long: Probable tRNA sulfurtransferase (404 aa).

The THUMP domain occupies 60–165 (QPVAESLKQI…EEAAYISYET (106 aa)). ATP-binding positions include 183–184 (ML), 208–209 (HF), R265, G287, and Q296.

Belongs to the ThiI family.

It localises to the cytoplasm. The enzyme catalyses [ThiI sulfur-carrier protein]-S-sulfanyl-L-cysteine + a uridine in tRNA + 2 reduced [2Fe-2S]-[ferredoxin] + ATP + H(+) = [ThiI sulfur-carrier protein]-L-cysteine + a 4-thiouridine in tRNA + 2 oxidized [2Fe-2S]-[ferredoxin] + AMP + diphosphate. It carries out the reaction [ThiS sulfur-carrier protein]-C-terminal Gly-Gly-AMP + S-sulfanyl-L-cysteinyl-[cysteine desulfurase] + AH2 = [ThiS sulfur-carrier protein]-C-terminal-Gly-aminoethanethioate + L-cysteinyl-[cysteine desulfurase] + A + AMP + 2 H(+). The protein operates within cofactor biosynthesis; thiamine diphosphate biosynthesis. In terms of biological role, catalyzes the ATP-dependent transfer of a sulfur to tRNA to produce 4-thiouridine in position 8 of tRNAs, which functions as a near-UV photosensor. Also catalyzes the transfer of sulfur to the sulfur carrier protein ThiS, forming ThiS-thiocarboxylate. This is a step in the synthesis of thiazole, in the thiamine biosynthesis pathway. The sulfur is donated as persulfide by IscS. This chain is Probable tRNA sulfurtransferase, found in Streptococcus sanguinis (strain SK36).